We begin with the raw amino-acid sequence, 1943 residues long: Trichohyalin (1943 aa).

An S-100-like region spans residues 1 to 91; the sequence is MSPLLRSICD…AQACYYALGQ (91 aa). EF-hand domains are found at residues 23-48 and 49-84; these read CDGA…LRRP and HDPK…VAQA. Residues aspartate 32, aspartate 62, aspartate 64, asparagine 66, arginine 68, and glutamate 73 each contribute to the Ca(2+) site. Disordered regions lie at residues 110-164, 186-209, and 222-274; these read LQDR…LEQR, RRAE…DEEQ, and GREE…LQEE. A compositionally biased stretch (basic and acidic residues) spans 197 to 209; it reads KGHETEEFPDEEQ. One copy of the 1-1; approximate repeat lies at 314-326; the sequence is RREQQEERREQQE. The tract at residues 314 to 377 is 5 X 13 AA tandem repeats of R-R-E-Q-E-E-E-R-R-E-Q-Q-L; it reads RREQQEERRE…QEEERREQQL (64 aa). A 1-2; approximate repeat occupies 327–339; that stretch reads RREQQEERREQQL. The stretch at 340–351 is one 1-3; approximate repeat; the sequence is RREQEERREQQL. 10 repeat units span residues 352–364, 365–377, 378–383, 384–389, 390–395, 396–401, 402–407, 408–413, 414–419, and 420–425. The 8 X 6 AA tandem repeats of R-R-E-Q-Q-L stretch occupies residues 378–425; that stretch reads RREQQLRREQQLRREQQLRREQQLRREQQLRREQQLRREQQLRREQQL. Positions 425-683 are 9 X 28 AA approximate tandem repeats; the sequence is LRREQEEERH…REHEEERREQ (259 aa). Disordered stretches follow at residues 426–485, 509–546, 608–819, and 837–872; these read RREQ…EERR, REQE…EERR, ERLE…EKEQ, and EEQL…RRDQ. Basic and acidic residues-rich tracts occupy residues 608–684, 724–781, 789–812, and 859–872; these read ERLE…REQE, RKQE…ERGR, PLRE…RFLP, and DQER…RRDQ. Tandem repeats lie at residues 906–935, 936–965, 966–995, 996–1025, 1026–1055, 1056–1085, 1086–1115, 1116–1145, 1146–1175, and 1176–1204. The segment at 906-1204 is 10 X 30 AA tandem repeats; that stretch reads LQEEEEELQR…RERQYREEEE (299 aa). Over residues 950-992 the composition is skewed to basic and acidic residues; that stretch reads KRRRQERERQYRKDKKLQQKEEQLLGEEPEKRRRQEREKKYRE. Disordered regions lie at residues 950 to 1000, 1046 to 1120, 1137 to 1162, 1193 to 1371, 1404 to 1435, 1492 to 1691, 1757 to 1820, 1834 to 1864, and 1876 to 1928; these read KRRR…QQEE, RERQ…QQEE, ERQY…EKRR, QERE…RHQE, REQQ…FREE, QQLR…ERDR, PERE…RDGK, EQRL…EQEL, and RERK…VRSS. Positions 1052–1064 are enriched in acidic residues; the sequence is EEEELQQEEEQLL. 2 stretches are compositionally biased toward basic and acidic residues: residues 1065 to 1085 and 1092 to 1111; these read GEER…KEEE and QLLR…RQCR. The segment covering 1142–1151 has biased composition (acidic residues); sequence EEEEVQQEEE. Residues 1152–1162 show a composition bias toward basic and acidic residues; the sequence is QLLREEPEKRR. Composition is skewed to basic and acidic residues over residues 1214 to 1263 and 1274 to 1371; these read YRDE…DRQS and QQER…RHQE. A 23 X 26 AA approximate tandem repeats region spans residues 1292–1894; it reads HFPEEEQLER…IRRQQKEEQR (603 aa). 3 stretches are compositionally biased toward basic and acidic residues: residues 1492–1524, 1533–1673, and 1682–1691; these read QQLR…EQQL, FLQE…REEE, and QQLRRQERDR. The span at 1876 to 1912 shows a compositional bias: basic and acidic residues; the sequence is RERKLREEHIRRQQKEEQRHRQVGEIKSQEGKGHGRL.

It belongs to the S100-fused protein family. As to quaternary structure, monomer. Substrate of transglutaminase. Some 200 arginines are probably converted to citrullines by peptidylarginine deimidase. In terms of tissue distribution, found in the hard keratinizing tissues such as the inner root sheath (IRS) of hair follicles and medulla, and in the filiform papillae of dorsal tongue epithelium.

In terms of biological role, intermediate filament-associated protein that associates in regular arrays with keratin intermediate filaments (KIF) of the inner root sheath cells of the hair follicle and the granular layer of the epidermis. It later becomes cross-linked to KIF by isodipeptide bonds. It may serve as scaffold protein, together with involucrin, in the organization of the cell envelope or even anchor the cell envelope to the KIF network. It may be involved in its own calcium-dependent postsynthetic processing during terminal differentiation. The sequence is that of Trichohyalin (TCHH) from Homo sapiens (Human).